A 963-amino-acid chain; its full sequence is VPS35 endosomal protein-sorting factor-like (963 aa).

Residues 43–112 form a disordered region; the sequence is SKTKKVSRKG…DKDENSFVGP (70 aa). The span at 51 to 72 shows a compositional bias: low complexity; sequence KGSTSSTSSSSSSSVIDPLSSV. A Phosphoserine modification is found at serine 265. A helical membrane pass occupies residues 699–719; the sequence is AFVRACVAYCFITIPSLVGIF.

This sequence belongs to the VPS35L family. Component of the heterotrimeric retriever complex formed by VPS26C, VPS29 and VPS35L. Interacts with VPS29. Interacts with COMMD1, CCDC93 and CCDC22; associates with the CCC (COMMD/CCDC22/CCDC93) complex which contains at least COMMD1 (and possibly other COMM domain-containing proteins), CCDC22 and CCDC93. Interacts with WASHC1, WASHC2A and WASHC2C. Interacts with SNX17 and SNX31.

It localises to the membrane. It is found in the endosome. Its function is as follows. Acts as a component of the retriever complex. The retriever complex is a heterotrimeric complex related to retromer cargo-selective complex (CSC) and essential for retromer-independent retrieval and recycling of numerous cargos such as integrin alpha-5/beta-1 (ITGA5:ITGB1). The recruitment of the retriever complex to the endosomal membrane involves CCC and WASH complexes. In the endosomes, drives the retrieval and recycling of NxxY-motif-containing cargo proteins by coupling to SNX17, a cargo essential for the homeostatic maintenance of numerous cell surface proteins associated with processes that include cell migration, cell adhesion, nutrient supply and cell signaling. Involved in copper-dependent ATP7A trafficking between the trans-Golgi network and vesicles in the cell periphery; the function is proposed to depend on its association with the CCC complex and cooperation with the WASH complex on early endosomes. Seems not to be required for CCC complex stability. The sequence is that of VPS35 endosomal protein-sorting factor-like from Mus musculus (Mouse).